A 476-amino-acid chain; its full sequence is Ribosomal protein uS12 methylthiotransferase RimO (476 aa).

The region spanning 33–143 (NRIGFVSLGC…VLKHVHKYVP (111 aa)) is the MTTase N-terminal domain. [4Fe-4S] cluster contacts are provided by Cys42, Cys78, Cys107, Cys175, Cys179, and Cys182. Positions 161–398 (LTPKHYAYLK…MEVQAEISAE (238 aa)) constitute a Radical SAM core domain. In terms of domain architecture, TRAM spans 401–467 (ARFVGRTMDI…EHDLWAELVD (67 aa)).

It belongs to the methylthiotransferase family. RimO subfamily. Requires [4Fe-4S] cluster as cofactor.

It localises to the cytoplasm. The catalysed reaction is L-aspartate(89)-[ribosomal protein uS12]-hydrogen + (sulfur carrier)-SH + AH2 + 2 S-adenosyl-L-methionine = 3-methylsulfanyl-L-aspartate(89)-[ribosomal protein uS12]-hydrogen + (sulfur carrier)-H + 5'-deoxyadenosine + L-methionine + A + S-adenosyl-L-homocysteine + 2 H(+). Its function is as follows. Catalyzes the methylthiolation of an aspartic acid residue of ribosomal protein uS12. In Shewanella sp. (strain MR-4), this protein is Ribosomal protein uS12 methylthiotransferase RimO.